The sequence spans 702 residues: Ribosomal RNA large subunit methyltransferase K/L (702 aa).

The THUMP domain occupies 43–154; it reads LIYQSLMWSR…KETASIALDL (112 aa).

This sequence belongs to the methyltransferase superfamily. RlmKL family.

It localises to the cytoplasm. It carries out the reaction guanosine(2445) in 23S rRNA + S-adenosyl-L-methionine = N(2)-methylguanosine(2445) in 23S rRNA + S-adenosyl-L-homocysteine + H(+). The catalysed reaction is guanosine(2069) in 23S rRNA + S-adenosyl-L-methionine = N(2)-methylguanosine(2069) in 23S rRNA + S-adenosyl-L-homocysteine + H(+). In terms of biological role, specifically methylates the guanine in position 2445 (m2G2445) and the guanine in position 2069 (m7G2069) of 23S rRNA. The chain is Ribosomal RNA large subunit methyltransferase K/L from Salmonella arizonae (strain ATCC BAA-731 / CDC346-86 / RSK2980).